The chain runs to 436 residues: Probable G-protein coupled receptor C06G4.5 (436 aa).

At 1–53 the chain is on the extracellular side; sequence MSTNLVDYVDDSYLNQSMNSENGLDSVTQIMYDMKKYNIVNDVLPPPNHEDLH. Asn15 carries N-linked (GlcNAc...) asparagine glycosylation. Residues 54-74 form a helical membrane-spanning segment; it reads VVIMAVSYLLLFLLGTCGNVA. The Cytoplasmic portion of the chain corresponds to 75–94; it reads VLTTIYHVIRSSRATLDNTL. A helical transmembrane segment spans residues 95-115; that stretch reads IYVIVLSCVDFGVCLSLPITV. Topologically, residues 116-132 are extracellular; sequence IDQILGFWMFGKIPCKL. Residues 133-153 traverse the membrane as a helical segment; that stretch reads HAVFENFGKILSALILTAMSF. The Cytoplasmic portion of the chain corresponds to 154–171; that stretch reads DRYAGVCHPQRKRLRSRN. The helical transmembrane segment at 172–192 threads the bilayer; that stretch reads FAITILLVLAVYAFITLCPLL. Residues 193–230 are Extracellular-facing; that stretch reads WSFTAREIILYAKETAPGMLTRMKIEKCTVDIDSQMFT. A helical membrane pass occupies residues 231–251; it reads AFTIYQFILCYCTPLVLIAFF. At 252 to 281 the chain is on the cytoplasmic side; the sequence is YTKLLSKLREHTRTFKSSQIPFLHISLYTL. Residues 282-302 traverse the membrane as a helical segment; sequence AVACFYFLCWTPFWMATLFAV. The Extracellular segment spans residues 303–316; that stretch reads YLENSANSSSVPPV. Asn309 carries N-linked (GlcNAc...) asparagine glycosylation. Residues 317–337 form a helical membrane-spanning segment; the sequence is FVYIMYFIHALPFTNSAINWI. The Cytoplasmic portion of the chain corresponds to 338–436; the sequence is LYGALNGQLQ…LLSNHNPTFL (99 aa).

This sequence belongs to the G-protein coupled receptor 1 family.

Its subcellular location is the cell membrane. Its function is as follows. Putative receptor. The sequence is that of Probable G-protein coupled receptor C06G4.5 from Caenorhabditis elegans.